Here is a 1629-residue protein sequence, read N- to C-terminus: Ferredoxin-dependent glutamate synthase 2, chloroplastic (1629 aa).

A chloroplast-targeting transit peptide spans 1–107 (MALQSPGATG…LEDIISERGA (107 aa)). Catalysis depends on cysteine 108, which acts as the For GATase activity. The 400-residue stretch at 108-507 (CGVGFIANLE…PGMMISVDLE (400 aa)) folds into the Glutamine amidotransferase type-2 domain. 1186–1243 (LAETQKTLIGNGLRERVIIRVDGGFKSGVDVLIAAAMGADEYGFGTLAMIATGCIMAR) provides a ligand contact to FMN. [3Fe-4S] cluster contacts are provided by cysteine 1239, cysteine 1245, and cysteine 1250. Positions 1599 to 1629 (SEEDTPEANSDHILKTTTGDEEQVSSTLAEK) are disordered.

Belongs to the glutamate synthase family. [3Fe-4S] cluster is required as a cofactor. The cofactor is FAD. It depends on FMN as a cofactor. Expressed predominantly in roots and slightly in leaves. Low expression in the leaf mesophyll and phloem companion cell-sieve element complex.

Its subcellular location is the plastid. It is found in the chloroplast stroma. It catalyses the reaction 2 oxidized [2Fe-2S]-[ferredoxin] + 2 L-glutamate = L-glutamine + 2 reduced [2Fe-2S]-[ferredoxin] + 2-oxoglutarate + 2 H(+). It functions in the pathway amino-acid biosynthesis; L-glutamate biosynthesis via GLT pathway; L-glutamate from 2-oxoglutarate and L-glutamine (ferredoxin route): step 1/1. The protein operates within energy metabolism; nitrogen metabolism. May play a role in primary nitrogen assimilation in roots. Could supply a constitutive level of glutamate to maintain a basal level of protein synthesis. This Arabidopsis thaliana (Mouse-ear cress) protein is Ferredoxin-dependent glutamate synthase 2, chloroplastic (GLU2).